The primary structure comprises 546 residues: Chaperonin GroEL (546 aa).

Residues 30–33, Lys-51, 87–91, Gly-415, 479–481, and Asp-495 each bind ATP; these read TLGP, DGTTT, and NAA. The tract at residues 526 to 546 is disordered; that stretch reads KKGDSAPAGGGMGDMGGMGMM. The span at 533 to 546 shows a compositional bias: gly residues; that stretch reads AGGGMGDMGGMGMM.

Belongs to the chaperonin (HSP60) family. In terms of assembly, forms a cylinder of 14 subunits composed of two heptameric rings stacked back-to-back. Interacts with the co-chaperonin GroES.

The protein localises to the cytoplasm. It carries out the reaction ATP + H2O + a folded polypeptide = ADP + phosphate + an unfolded polypeptide.. In terms of biological role, together with its co-chaperonin GroES, plays an essential role in assisting protein folding. The GroEL-GroES system forms a nano-cage that allows encapsulation of the non-native substrate proteins and provides a physical environment optimized to promote and accelerate protein folding. The polypeptide is Chaperonin GroEL (Thioalkalivibrio sulfidiphilus (strain HL-EbGR7)).